Reading from the N-terminus, the 539-residue chain is Chaperone Ric-8A (539 aa).

The protein belongs to the synembryn family.

It is found in the cytoplasm. The protein localises to the cell cortex. Functionally, chaperone that specifically binds and folds nascent G alpha proteins prior to G protein heterotrimer formation, promoting their stability and activity: folds GNAI1, GNAO1, GNA13 and GNAQ. Does not fold G(s) G-alpha proteins GNAS nor GNAL. Also acts as a guanine nucleotide exchange factor (GEF) for G alpha proteins by stimulating exchange of bound GDP for free GTP. The sequence is that of Chaperone Ric-8A (ric8a) from Xenopus tropicalis (Western clawed frog).